Consider the following 86-residue polypeptide: Weak neurotoxin 6 (86 aa).

A signal peptide spans 1–21 (MKTLLLTLVVVTIVCLDLGYT). Disulfide bonds link C24-C45, C27-C32, C38-C63, C67-C78, and C79-C84.

The protein belongs to the three-finger toxin family. Ancestral subfamily. Orphan group II sub-subfamily. As to expression, expressed by the venom gland.

The protein localises to the secreted. Its function is as follows. Binds with low affinity to muscular (alpha-1-beta-1-delta-epsilon/CHRNA1-CHRNB1-CHRND-CHRNE) and very low affinity to neuronal (alpha-7/CHRNA7) nicotinic acetylcholine receptor (nAChR). The chain is Weak neurotoxin 6 from Naja sputatrix (Malayan spitting cobra).